The chain runs to 421 residues: MSISNQSGLDILREVDDEGQENSFLRKTTRKIQQFFKSDPGYQSRKAEYNSPAKATGDVNINVTSQDWLSKLDRNLSIENLTGKSLGIVVVSGRNKGLIKNPFLGGLVDIVMRRQDKLYLKSVEQVSSEYSPMQEQVYEFKVDMPLVQKRLGAFLKKNRVDGLSLSMHFSTGNYSLPVLIRHVLLYDYYTDDMKDSLWRAMIIYVSRQVTSNKYTKFHLWCVQKRIGNIRMYLVRPGDVYSFQGQTSWAAICNKSYMCNIQLEQSPEVSVKSSLPKYSNEPIFQSKTISQEEVGWLLFMLSIGNHARAFPIQNYLANTVMETVLPVELRCPFLSRSVDCEIFQKNTKRRVMEKWRQEFKKDLNVCEELEFKNVKKSGYMQPLFDLTMPLGCFDSLETKEMFYLRHNIAGFQADLTPYPMRI.

Belongs to the UPF0300 family.

Its subcellular location is the cytoplasm. The protein is UPF0300 protein C737.04 of Schizosaccharomyces pombe (strain 972 / ATCC 24843) (Fission yeast).